The sequence spans 230 residues: tRNA (guanine-N(7)-)-methyltransferase (230 aa).

Residues Glu-61, Glu-86, Asn-113, and Asp-136 each contribute to the S-adenosyl-L-methionine site. Asp-136 is a catalytic residue. Substrate contacts are provided by residues Lys-140, Asp-172, and 208–211 (TKYE).

Belongs to the class I-like SAM-binding methyltransferase superfamily. TrmB family.

It carries out the reaction guanosine(46) in tRNA + S-adenosyl-L-methionine = N(7)-methylguanosine(46) in tRNA + S-adenosyl-L-homocysteine. It functions in the pathway tRNA modification; N(7)-methylguanine-tRNA biosynthesis. Functionally, catalyzes the formation of N(7)-methylguanine at position 46 (m7G46) in tRNA. The chain is tRNA (guanine-N(7)-)-methyltransferase from Mycobacterium leprae (strain Br4923).